We begin with the raw amino-acid sequence, 296 residues long: tRNA dimethylallyltransferase (296 aa).

Gly-2–Thr-9 is an ATP binding site. Thr-4–Thr-9 is a binding site for substrate. 3 interaction with substrate tRNA regions span residues Asp-27 to Leu-30, Gln-151 to Arg-155, and Arg-232 to Arg-237.

Belongs to the IPP transferase family. As to quaternary structure, monomer. The cofactor is Mg(2+).

The enzyme catalyses adenosine(37) in tRNA + dimethylallyl diphosphate = N(6)-dimethylallyladenosine(37) in tRNA + diphosphate. Functionally, catalyzes the transfer of a dimethylallyl group onto the adenine at position 37 in tRNAs that read codons beginning with uridine, leading to the formation of N6-(dimethylallyl)adenosine (i(6)A). This chain is tRNA dimethylallyltransferase, found in Shewanella woodyi (strain ATCC 51908 / MS32).